The sequence spans 299 residues: Ribosome-inactivating protein saporin-6 (299 aa).

The first 24 residues, 1–24 (MKIYVVATIAWILLQFSAWTTTDA), serve as a signal peptide directing secretion. Glu200 is a catalytic residue. Positions 278–299 (SSNEANSTVRHYGPLKPTLLIT) are excised as a propeptide. An N-linked (GlcNAc...) asparagine glycan is attached at Asn283.

It belongs to the ribosome-inactivating protein family. Type 1 RIP subfamily. In terms of tissue distribution, seeds and leaves of the plant.

It carries out the reaction Endohydrolysis of the N-glycosidic bond at one specific adenosine on the 28S rRNA.. Ribosome-inactivating protein of type 1, inhibits protein synthesis in animal cells. Useful as immunotoxin for pharmacological applications. The polypeptide is Ribosome-inactivating protein saporin-6 (SAP6) (Saponaria officinalis (Common soapwort)).